A 340-amino-acid polypeptide reads, in one-letter code: Protein-arginine kinase (340 aa).

The Phosphagen kinase C-terminal domain maps to 14 to 241 (IVLSSRIRLA…YQIINQEKLA (228 aa)). ATP contacts are provided by residues 17–21 (SSRIR), R112, 163–167 (RASVM), and 194–199 (RGIYGE).

It belongs to the ATP:guanido phosphotransferase family.

The catalysed reaction is L-arginyl-[protein] + ATP = N(omega)-phospho-L-arginyl-[protein] + ADP + H(+). Its function is as follows. Catalyzes the specific phosphorylation of arginine residues in proteins. This is Protein-arginine kinase from Clostridium tetani (strain Massachusetts / E88).